The sequence spans 478 residues: Protein adenylyltransferase VbhT (478 aa).

The 146-residue stretch at 55-200 (FDLDHMKKIH…RRNLTEFTVN (146 aa)) folds into the Fido domain. Residues 85-88 (KDNS), 133-136 (NALH), 140-147 (EGNGRTLR), and Ser-175 contribute to the ATP site.

As to quaternary structure, homodimer. Interacts with VbhA.

The catalysed reaction is L-tyrosyl-[protein] + ATP = O-(5'-adenylyl)-L-tyrosyl-[protein] + diphosphate. The enzyme catalyses L-threonyl-[protein] + ATP = 3-O-(5'-adenylyl)-L-threonyl-[protein] + diphosphate. Adenylyltransferase activity is inhibited by antitoxin VbhA; which acts by competing with ATP-binding at Arg-147 and prevents productive ATP-binding. Functionally, toxic component of type II toxin-antitoxin (TA) system VbhT-VbhA. Adenylyltransferase involved in virulence by mediating the addition of adenosine 5'-monophosphate (AMP) to specific residue of host GTPases. The resulting AMPylation affects GTPases, impairing actin assembly in infected cells. The chain is Protein adenylyltransferase VbhT (vbhT) from Bartonella schoenbuchensis (strain DSM 13525 / NCTC 13165 / R1).